Here is a 1556-residue protein sequence, read N- to C-terminus: MEPGSDDFLPPPECPVFEPSWAEFRDPLGYIAKIRPIAEKSGICKIRPPADWQPPFAVEVDNFRFTPRIQRLNELEAQTRVKLNYLDQIAKFWEIQGSSLKIPNVERRILDLYSLSKIVVEEGGYEAICKDRRWARVAQRLNYPPGKNIGSLLRSHYERIVYPYEMYQSGANLVQCNTRPFDNEEKDKEYKPHSIPLRQSVQPSKFNSYGRRAKRLQPDPEPTEEDIEKNPELKKLQIYGAGPKMMGLGLMAKDKTLRKKDKEGPECPPTVVVKEESGGDVKVESTSPKTFLESKEELSHSPEPCTKMTMRLRRNHSNAQFIESYVCRMCSRGDEDDKLLLCDGCDDNYHIFCLLPPLPEIPKGVWRCPKCVMAECKRPPEAFGFEQATREYTLQSFGEMADSFKADYFNMPVHMVPTELVEKEFWRLVNSIEEDVTVEYGADIHSKEFGSGFPVSDNKRHLTPEEEEYATSGWNLNVMPVLEQSVLCHINADISGMKVPWLYVGMVFSAFCWHIEDHWSYSINYLHWGEPKTWYGVPSLAAEHLEEVMKKLTPELFDSQPDLLHQLVTLMNPNTLMSHGVPVVRTNQCAGEFVITFPRAYHSGFNQGYNFAEAVNFCTADWLPAGRQCIEHYRRLRRYCVFSHEELICKMAACPEKLDLNLAAAVHKEMFIMVQEERRLRKALLEKGITEAEREAFELLPDDERQCIKCKTTCFLSALACYDCPDGLVCLSHINDLCKCSSSRQYLRYRYTLDELPAMLHKLKVRAESFDTWANKVRVALEVEDGRKRSLEELRALESEARERRFPNSELLQRLKNCLSEAEACVSRALGLVSGQEAGPHRVAGLQMTLAELRAFLDQMNNLPCAMHQIGDVKGILEQVEGYQAEAREALASLPSSPGLLQSLLERGQQLGVEVPEAQQLQRQVEQARWLDEVKRTLAPAARRGTLAVMRGLLVAGASVAPSPAVDKARAELQELLTIAERWEEKAHLCLEARQKHPPATLEAIIHEAENIPVHLPNIQALKEALAKARAWIADVDEIQNGDHYPCLDDLEGLVAVGRDLPVGLEELRQLELQVLTAHSWREKASKTFLKKNSCYTLLEVLCPCADAGSDSIKRSRWMEKELGLYKSDTELLGLSAQDLRDPGSVIVAFKEGEQKEKEGILQLRRTNSAKPSPLASSATASSATSVCVCGQVPAGVGALQCDLCQDWFHGRCVSVPRLLSSPRPSPTSSPLLAWWEWDTKFLCPLCMRSRRPRLETILALLVALQRLPVRLPEGEALQCLTERAISWQGRARQALASEDVTALLGRLAELRQRLQAEPRPEEPPTYPPAPASDPLREGSGKDMPKVQGLLENGDSVTSPEKVALGEGSDLELLSSLLPQLTGPALELPEATRAPLEELMLEGDLLEVTLDENHSIWQLLQAGQPPDMERIRTLLELEKAERHGSRARGRALERRRRRKVDRGGEGDDPAREELEPKRVRSSGPEAEEAQEEEELEEETGGEGPPQTLPTTGSPSTQENQNGLEPALATSGPSAPFSTLSPQLHVPCPQQPPQQQL.

A JmjN domain is found at 14 to 55 (CPVFEPSWAEFRDPLGYIAKIRPIAEKSGICKIRPPADWQPP). Positions 79–169 (TRVKLNYLDQ…IVYPYEMYQS (91 aa)) constitute an ARID domain. Over residues 197-207 (LRQSVQPSKFN) the composition is skewed to polar residues. Residues 197 to 227 (LRQSVQPSKFNSYGRRAKRLQPDPEPTEEDI) are disordered. Residues Lys205, Lys229, Lys244, and Lys274 each participate in a glycyl lysine isopeptide (Lys-Gly) (interchain with G-Cter in SUMO2) cross-link. Residues 257–303 (LRKKDKEGPECPPTVVVKEESGGDVKVESTSPKTFLESKEELSHSPE) are disordered. Basic and acidic residues predominate over residues 273–283 (VKEESGGDVKV). Ser287 is subject to Phosphoserine. Residue Lys295 forms a Glycyl lysine isopeptide (Lys-Gly) (interchain with G-Cter in SUMO2) linkage. Ser301 and Ser317 each carry phosphoserine. The PHD-type 1 zinc finger occupies 324–374 (SYVCRMCSRGDEDDKLLLCDGCDDNYHIFCLLPPLPEIPKGVWRCPKCVMA). Positions 468 to 634 (EYATSGWNLN…AGRQCIEHYR (167 aa)) constitute a JmjC domain. 3 residues coordinate Fe cation: His514, Asp517, and His602. Residues Ser893 and Ser897 each carry the phosphoserine modification. A Glycyl lysine isopeptide (Lys-Gly) (interchain with G-Cter in SUMO2) cross-link involves residue Lys1127. The segment at 1185 to 1250 (TSVCVCGQVP…KFLCPLCMRS (66 aa)) adopts a PHD-type 2 zinc-finger fold. Disordered stretches follow at residues 1315–1362 (LQAE…SPEK) and 1441–1556 (ERHG…QQQL). Residues 1335-1345 (PLREGSGKDMP) are compositionally biased toward basic and acidic residues. Position 1359 is a phosphoserine (Ser1359). Over residues 1445-1460 (SRARGRALERRRRRKV) the composition is skewed to basic residues. The span at 1461–1478 (DRGGEGDDPAREELEPKR) shows a compositional bias: basic and acidic residues. The segment covering 1485-1500 (EAEEAQEEEELEEETG) has biased composition (acidic residues). Polar residues-rich tracts occupy residues 1513–1522 (SPSTQENQNG) and 1530–1540 (SGPSAPFSTLS). A compositionally biased stretch (low complexity) spans 1541–1556 (PQLHVPCPQQPPQQQL).

Belongs to the JARID1 histone demethylase family. As to quaternary structure, part of two distinct complexes, one containing E2F6, and the other containing REST. Interacts with ZMYND8. Fe(2+) is required as a cofactor.

It localises to the nucleus. The catalysed reaction is N(6),N(6),N(6)-trimethyl-L-lysyl(4)-[histone H3] + 3 2-oxoglutarate + 3 O2 = L-lysyl(4)-[histone H3] + 3 formaldehyde + 3 succinate + 3 CO2. Histone demethylase that specifically demethylates 'Lys-4' of histone H3, thereby playing a central role in histone code. Does not demethylate histone H3 'Lys-9', H3 'Lys-27', H3 'Lys-36', H3 'Lys-79' or H4 'Lys-20'. Demethylates trimethylated and dimethylated but not monomethylated H3 'Lys-4'. Participates in transcriptional repression of neuronal genes by recruiting histone deacetylases and REST at neuron-restrictive silencer elements. Represses the CLOCK-BMAL1 heterodimer-mediated transcriptional activation of the core clock component PER2. This Canis lupus familiaris (Dog) protein is Lysine-specific demethylase 5C (KDM5C).